The primary structure comprises 136 residues: NADH-ubiquinone oxidoreductase chain 2 (136 aa).

A run of 4 helical transmembrane segments spans residues Y12–F32, F34–V54, I74–V94, and F99–L119.

Belongs to the complex I subunit 2 family.

The protein resides in the mitochondrion inner membrane. It catalyses the reaction a ubiquinone + NADH + 5 H(+)(in) = a ubiquinol + NAD(+) + 4 H(+)(out). Core subunit of the mitochondrial membrane respiratory chain NADH dehydrogenase (Complex I) that is believed to belong to the minimal assembly required for catalysis. Complex I functions in the transfer of electrons from NADH to the respiratory chain. The immediate electron acceptor for the enzyme is believed to be ubiquinone. This is NADH-ubiquinone oxidoreductase chain 2 (ND2) from Artemia salina (Brine shrimp).